Here is a 1086-residue protein sequence, read N- to C-terminus: Selenocysteine insertion sequence-binding protein 2-like (1086 aa).

Disordered stretches follow at residues 155-207, 243-386, 615-657, 880-904, and 919-1086; these read GQAF…GPDS, AKGR…SESL, QEDA…SPMA, SDGL…KPSR, and AAGS…PQST. A compositionally biased stretch (polar residues) spans 193-206; sequence NVATQKETSATGPD. Residue serine 276 is modified to Phosphoserine. 2 stretches are compositionally biased toward polar residues: residues 294–303 and 328–344; these read GTMNRLESSG and QAFS…NNLQ. Residues 355-370 show a composition bias toward basic and acidic residues; that stretch reads SSERRQNLQKRQDNKH. Over residues 624 to 657 the composition is skewed to polar residues; sequence SDASLSPASQNSPYCMTPVSQGSPASSGIGSPMA. Residues 922–931 are compositionally biased toward polar residues; it reads SITSAPSQGK. The span at 933-943 shows a compositional bias: basic and acidic residues; sequence TGDKDELKPDD. The segment covering 947 to 957 has biased composition (polar residues); the sequence is ASQQSTETGSL. Residues 981-994 show a composition bias toward acidic residues; it reads LEEEEDEEEEEEDY. Positions 1004 to 1022 are enriched in polar residues; sequence QLNSRIESWVSETQRTMET. The segment covering 1032-1046 has biased composition (acidic residues); that stretch reads SEEDSAEQSGEEAAE.

Binds SECIS (Sec insertion sequence) elements present on selenocysteine (Sec) protein mRNAs, but does not promote Sec incorporation into selenoproteins. The polypeptide is Selenocysteine insertion sequence-binding protein 2-like (Secisbp2l) (Mus musculus (Mouse)).